Reading from the N-terminus, the 432-residue chain is UPF0761 membrane protein Cag_0935 (432 aa).

6 consecutive transmembrane segments (helical) span residues 52-72, 108-128, 148-168, 190-210, 220-240, and 254-274; these read LLSI…FEVF, NIPL…LSTV, FTLY…SLAA, LLAL…YMLV, AFAG…WFLF, and ALSV…VVLV.

Belongs to the UPF0761 family.

It localises to the cell inner membrane. This is UPF0761 membrane protein Cag_0935 from Chlorobium chlorochromatii (strain CaD3).